Reading from the N-terminus, the 319-residue chain is Small ribosomal subunit protein mS35 (319 aa).

The N-terminal 30 residues, 1-30, are a transit peptide targeting the mitochondrion; it reads MKVPLGLWKVSRGNLWSTQKRVLTMSRCLN.

Belongs to the mitochondrion-specific ribosomal protein mS35 family. As to quaternary structure, component of the mitochondrial small ribosomal subunit (mt-SSU). Mature yeast 74S mitochondrial ribosomes consist of a small (37S) and a large (54S) subunit. The 37S small subunit contains a 15S ribosomal RNA (15S mt-rRNA) and 34 different proteins. The 54S large subunit contains a 21S rRNA (21S mt-rRNA) and 46 different proteins.

The protein localises to the mitochondrion. Component of the mitochondrial ribosome (mitoribosome), a dedicated translation machinery responsible for the synthesis of mitochondrial genome-encoded proteins, including at least some of the essential transmembrane subunits of the mitochondrial respiratory chain. The mitoribosomes are attached to the mitochondrial inner membrane and translation products are cotranslationally integrated into the membrane. The sequence is that of Small ribosomal subunit protein mS35 (RSM24) from Saccharomyces cerevisiae (strain ATCC 204508 / S288c) (Baker's yeast).